A 32-amino-acid polypeptide reads, in one-letter code: Hyaluronidase-Pk1a (32 aa).

Residue Asn23 is glycosylated (N-linked (GlcNAc...) asparagine).

This sequence belongs to the glycosyl hydrolase 56 family. In terms of tissue distribution, expressed by the venom gland.

Its subcellular location is the secreted. The enzyme catalyses Random hydrolysis of (1-&gt;4)-linkages between N-acetyl-beta-D-glucosamine and D-glucuronate residues in hyaluronate.. Functionally, hydrolyzes high molecular weight hyaluronic acid to produce small oligosaccharides. This Phoneutria keyserlingi (Brazilian wandering spider) protein is Hyaluronidase-Pk1a.